We begin with the raw amino-acid sequence, 150 residues long: Nascent polypeptide-associated complex subunit beta (150 aa).

Disordered stretches follow at residues 1–45 and 123–150; these read MADV…LQQS and YQNMQQKKDDDDEIPDLVAGESFENKVE. A compositionally biased stretch (basic residues) spans 23–32; it reads TPRRKVKRAP. The region spanning 36–101 is the NAC-A/B domain; that stretch reads GADDKKLQQS…GEDKELTELV (66 aa).

It belongs to the NAC-beta family. In terms of assembly, part of the nascent polypeptide-associated complex (NAC), consisting of EGD2 and EGD1. NAC associates with ribosomes via EGD1.

The protein localises to the cytoplasm. It localises to the nucleus. Component of the nascent polypeptide-associated complex (NAC), a dynamic component of the ribosomal exit tunnel, protecting the emerging polypeptides from interaction with other cytoplasmic proteins to ensure appropriate nascent protein targeting. The NAC complex also promotes mitochondrial protein import by enhancing productive ribosome interactions with the outer mitochondrial membrane and blocks the inappropriate interaction of ribosomes translating non-secretory nascent polypeptides with translocation sites in the membrane of the endoplasmic reticulum. EGD1 may act as a transcription factor that exert a negative effect on the expression of several genes that are transcribed by RNA polymerase II. This Chaetomium globosum (strain ATCC 6205 / CBS 148.51 / DSM 1962 / NBRC 6347 / NRRL 1970) (Soil fungus) protein is Nascent polypeptide-associated complex subunit beta (EGD1).